A 263-amino-acid polypeptide reads, in one-letter code: H-2 class II histocompatibility antigen, A-K beta chain (263 aa).

An N-terminal signal peptide occupies residues 1–27 (MALQIPSLLLLAAVVVLTVLSSPGTEG). The tract at residues 28–120 (GNSERHFVHQ…TETPTSLRRL (93 aa)) is beta-1. Residues 28 to 224 (GNSERHFVHQ…RAQSESARSK (197 aa)) lie on the Extracellular side of the membrane. 2 cysteine pairs are disulfide-bonded: Cys-42–Cys-104 and Cys-143–Cys-199. Asn-46 is a glycosylation site (N-linked (GlcNAc...) asparagine). Residues 121-214 (EQPSVVISLS…SLKSPITVEW (94 aa)) are beta-2. An Ig-like C1-type domain is found at 123 to 211 (PSVVISLSRT…EHPSLKSPIT (89 aa)). The segment at 215–224 (RAQSESARSK) is connecting peptide. A helical transmembrane segment spans residues 225 to 245 (MLSGIGGCVLGVIFLGLGLFI). Residues 246 to 263 (RHRSQKGPRGPPPAGLLQ) are Cytoplasmic-facing.

The protein belongs to the MHC class II family. In terms of processing, ubiquitinated in immature dendritic cells leading to down-regulation of MHC class II.

The protein resides in the membrane. This is H-2 class II histocompatibility antigen, A-K beta chain (H2-Ab1) from Mus musculus (Mouse).